Here is a 186-residue protein sequence, read N- to C-terminus: UPF0669 protein C6orf120 homolog (186 aa).

A signal peptide spans Met-1–Gly-19. Asn-47 is a glycosylation site (N-linked (GlcNAc...) asparagine). Residues Lys-141–Glu-165 form a disordered region. The span at Asn-142–Pro-159 shows a compositional bias: polar residues.

The protein belongs to the UPF0669 family.

The protein resides in the secreted. This chain is UPF0669 protein C6orf120 homolog, found in Danio rerio (Zebrafish).